The following is an 87-amino-acid chain: Small ribosomal subunit protein uS15 (87 aa).

The protein belongs to the universal ribosomal protein uS15 family. In terms of assembly, part of the 30S ribosomal subunit. Forms a bridge to the 50S subunit in the 70S ribosome, contacting the 23S rRNA.

One of the primary rRNA binding proteins, it binds directly to 16S rRNA where it helps nucleate assembly of the platform of the 30S subunit by binding and bridging several RNA helices of the 16S rRNA. In terms of biological role, forms an intersubunit bridge (bridge B4) with the 23S rRNA of the 50S subunit in the ribosome. The polypeptide is Small ribosomal subunit protein uS15 (Pseudothermotoga lettingae (strain ATCC BAA-301 / DSM 14385 / NBRC 107922 / TMO) (Thermotoga lettingae)).